The following is a 104-amino-acid chain: Flagellar hook-basal body complex protein FliE (104 aa).

It belongs to the FliE family.

It is found in the bacterial flagellum basal body. The protein is Flagellar hook-basal body complex protein FliE of Enterobacter sp. (strain 638).